We begin with the raw amino-acid sequence, 1563 residues long: Superkiller complex protein 3 (1563 aa).

Serine 2 bears the N-acetylserine mark. TPR repeat units follow at residues 6–39 (VKTA…EKNN), 40–73 (YNAW…EPEQ), 157–196 (YELW…ADNI), 272–305 (GPGL…SPVC), 307–339 (AGWC…IDNF), 386–419 (PGLL…YPDL), 420–453 (AEAH…DAEV), 455–492 (EYHY…DAHM), 493–527 (GKVF…DDND), 564–597 (KWAW…DPKD), 598–631 (CNCW…NPDS), 632–665 (TYSV…KEDY), 633–665 (YSVF…KEDY), 673–713 (GECH…RADV), 790–824 (VQHL…DSNN), 826–860 (LHWN…EQIN), 861–894 (AAAW…DPSY), 980–1013 (ASAF…LHSA), 1020–1053 (NVAV…ELED), 1055–1084 (IGFA…CKSE), 1325–1358 (KWSF…NPDQ), and 1399–1432 (VPAW…ASQQ).

The protein belongs to the SKI3 family. As to quaternary structure, component of the SKI complex which consists of SKIC2, SKIC3 and SKIC8. Interacts with PAF1.

It is found in the cytoplasm. Its subcellular location is the nucleus. Component of the SKI complex, a multiprotein complex that assists the RNA-degrading exosome during the mRNA decay and quality-control pathways. The SKI complex catalyzes mRNA extraction from 80S ribosomal complexes in the 3'-5' direction and channels mRNA to the cytosolic exosome for degradation. SKI-mediated extraction of mRNA from stalled ribosomes allow binding of the Pelota-HBS1L complex and subsequent ribosome disassembly by ABCE1 for ribosome recycling. In the nucleus, the SKI complex associates with transcriptionally active genes in a manner dependent on PAF1 complex (PAF1C). In Mus musculus (Mouse), this protein is Superkiller complex protein 3.